A 276-amino-acid polypeptide reads, in one-letter code: Small ribosomal subunit protein uS5w (276 aa).

Residues 1-15 (MAERGVERGGDRGDF) are compositionally biased toward basic and acidic residues. The segment at 1–42 (MAERGVERGGDRGDFGRGFGGRGGGRGGPRGRGRRAGRAPEE) is disordered. Positions 16–28 (GRGFGGRGGGRGG) are enriched in gly residues. Residues 87–150 (LKDEVMKIMP…ILAKLSVVPI (64 aa)) form the S5 DRBM domain.

Belongs to the universal ribosomal protein uS5 family.

The chain is Small ribosomal subunit protein uS5w (RPS2D) from Arabidopsis thaliana (Mouse-ear cress).